Consider the following 89-residue polypeptide: DNA-directed RNA polymerase subunit Rpo6 (89 aa).

The protein belongs to the archaeal Rpo6/eukaryotic RPB6 RNA polymerase subunit family. In terms of assembly, part of the RNA polymerase complex.

The protein localises to the cytoplasm. The enzyme catalyses RNA(n) + a ribonucleoside 5'-triphosphate = RNA(n+1) + diphosphate. DNA-dependent RNA polymerase (RNAP) catalyzes the transcription of DNA into RNA using the four ribonucleoside triphosphates as substrates. The protein is DNA-directed RNA polymerase subunit Rpo6 of Aeropyrum pernix (strain ATCC 700893 / DSM 11879 / JCM 9820 / NBRC 100138 / K1).